The chain runs to 113 residues: T cell receptor alpha variable 8-6 (113 aa).

A signal peptide spans 1 to 20; sequence MLLLLVPAFQVIFTLGGTRA. An Ig-like domain is found at 21-113; sequence QSVTQLDSQV…DTAEYFCAVS (93 aa). A disulfide bond links C42 and C110. Residues N43 and N87 are each glycosylated (N-linked (GlcNAc...) asparagine).

As to quaternary structure, alpha-beta TR is a heterodimer composed of an alpha and beta chain; disulfide-linked. The alpha-beta TR is associated with the transmembrane signaling CD3 coreceptor proteins to form the TR-CD3 (TcR or TCR). The assembly of alpha-beta TR heterodimers with CD3 occurs in the endoplasmic reticulum where a single alpha-beta TR heterodimer associates with one CD3D-CD3E heterodimer, one CD3G-CD3E heterodimer and one CD247 homodimer forming a stable octameric structure. CD3D-CD3E and CD3G-CD3E heterodimers preferentially associate with TR alpha and TR beta chains, respectively. The association of the CD247 homodimer is the last step of TcR assembly in the endoplasmic reticulum and is required for transport to the cell surface.

It is found in the cell membrane. In terms of biological role, v region of the variable domain of T cell receptor (TR) alpha chain that participates in the antigen recognition. Alpha-beta T cell receptors are antigen specific receptors which are essential to the immune response and are present on the cell surface of T lymphocytes. Recognize peptide-major histocompatibility (MH) (pMH) complexes that are displayed by antigen presenting cells (APC), a prerequisite for efficient T cell adaptive immunity against pathogens. Binding of alpha-beta TR to pMH complex initiates TR-CD3 clustering on the cell surface and intracellular activation of LCK that phosphorylates the ITAM motifs of CD3G, CD3D, CD3E and CD247 enabling the recruitment of ZAP70. In turn ZAP70 phosphorylates LAT, which recruits numerous signaling molecules to form the LAT signalosome. The LAT signalosome propagates signal branching to three major signaling pathways, the calcium, the mitogen-activated protein kinase (MAPK) kinase and the nuclear factor NF-kappa-B (NF-kB) pathways, leading to the mobilization of transcription factors that are critical for gene expression and essential for T cell growth and differentiation. The T cell repertoire is generated in the thymus, by V-(D)-J rearrangement. This repertoire is then shaped by intrathymic selection events to generate a peripheral T cell pool of self-MH restricted, non-autoaggressive T cells. Post-thymic interaction of alpha-beta TR with the pMH complexes shapes TR structural and functional avidity. This Homo sapiens (Human) protein is T cell receptor alpha variable 8-6.